Here is a 292-residue protein sequence, read N- to C-terminus: Bifunctional protein FolD (292 aa).

Residues 165–167 (GRS), Ser-190, and Thr-231 contribute to the NADP(+) site.

This sequence belongs to the tetrahydrofolate dehydrogenase/cyclohydrolase family. Homodimer.

It catalyses the reaction (6R)-5,10-methylene-5,6,7,8-tetrahydrofolate + NADP(+) = (6R)-5,10-methenyltetrahydrofolate + NADPH. The enzyme catalyses (6R)-5,10-methenyltetrahydrofolate + H2O = (6R)-10-formyltetrahydrofolate + H(+). It participates in one-carbon metabolism; tetrahydrofolate interconversion. Catalyzes the oxidation of 5,10-methylenetetrahydrofolate to 5,10-methenyltetrahydrofolate and then the hydrolysis of 5,10-methenyltetrahydrofolate to 10-formyltetrahydrofolate. The polypeptide is Bifunctional protein FolD (Arthrobacter globiformis).